Here is an 851-residue protein sequence, read N- to C-terminus: DEAD-box ATP-dependent RNA helicase 29 (851 aa).

The disordered stretch occupies residues 1–49 (MARLNPSKPSSRGGKPRSSSADAMAEHKPPPGRPKREGEGASKKKAKSG). A compositionally biased stretch (low complexity) spans 7-20 (SKPSSRGGKPRSSS). Positions 24–42 (MAEHKPPPGRPKREGEGAS) are enriched in basic and acidic residues. The short motif at 49-77 (GGFESMGLCEEVYRGVRHKGYRVPTPIQR) is the Q motif element. The 174-residue stretch at 80-253 (MPLILAGHDI…KAGLRDPQIV (174 aa)) folds into the Helicase ATP-binding domain. 93-100 (ARTGSGKT) contributes to the ATP binding site. The DEAD box signature appears at 201–204 (DEAD). The Helicase C-terminal domain occupies 277-426 (KLAALLYLVR…PAPTEEELLK (150 aa)). The segment at 702-851 (KWQQKTHRSI…KGKMKGKGTR (150 aa)) is disordered. Over residues 733-746 (RGNRKHTAAGRGRR) the composition is skewed to basic residues. Basic and acidic residues-rich tracts occupy residues 773–787 (DIARMKNRSTKESKF) and 796–825 (RHDGPSKDGKFQKNRRPDGNGKNRRPDGNG). Residues 841–851 (GKGKMKGKGTR) show a composition bias toward basic residues.

Belongs to the DEAD box helicase family. DDX54/DBP10 subfamily.

It catalyses the reaction ATP + H2O = ADP + phosphate + H(+). This chain is DEAD-box ATP-dependent RNA helicase 29, found in Oryza sativa subsp. indica (Rice).